The primary structure comprises 430 residues: Adenylosuccinate synthetase (430 aa).

Residues 12–18 and 40–42 contribute to the GTP site; these read GDEGKGK and GHT. Catalysis depends on Asp13, which acts as the Proton acceptor. Residues Asp13 and Gly40 each coordinate Mg(2+). IMP contacts are provided by residues 13 to 16, 38 to 41, Thr128, Arg142, Gln223, Thr238, and Arg302; these read DEGK and NAGH. His41 acts as the Proton donor in catalysis. 298-304 is a binding site for substrate; it reads TTTGRPR. GTP-binding positions include Arg304, 330–332, and 412–414; these read SID and SVG.

The protein belongs to the adenylosuccinate synthetase family. As to quaternary structure, homodimer. Requires Mg(2+) as cofactor.

The protein localises to the cytoplasm. It catalyses the reaction IMP + L-aspartate + GTP = N(6)-(1,2-dicarboxyethyl)-AMP + GDP + phosphate + 2 H(+). Its pathway is purine metabolism; AMP biosynthesis via de novo pathway; AMP from IMP: step 1/2. Functionally, plays an important role in the de novo pathway of purine nucleotide biosynthesis. Catalyzes the first committed step in the biosynthesis of AMP from IMP. The sequence is that of Adenylosuccinate synthetase from Enterococcus faecalis (strain ATCC 700802 / V583).